A 577-amino-acid polypeptide reads, in one-letter code: Aspartate--tRNA(Asp) ligase (577 aa).

Glu172 serves as a coordination point for L-aspartate. The tract at residues 196–199 (QLFK) is aspartate. Arg218 lines the L-aspartate pocket. Residues 218 to 220 (RDE) and Gln227 each bind ATP. Position 438 (His438) interacts with L-aspartate. Glu473 serves as a coordination point for ATP. Arg480 contributes to the L-aspartate binding site. 525 to 528 (GFDR) is a binding site for ATP.

The protein belongs to the class-II aminoacyl-tRNA synthetase family. Type 1 subfamily. In terms of assembly, homodimer.

The protein resides in the cytoplasm. The enzyme catalyses tRNA(Asp) + L-aspartate + ATP = L-aspartyl-tRNA(Asp) + AMP + diphosphate. Catalyzes the attachment of L-aspartate to tRNA(Asp) in a two-step reaction: L-aspartate is first activated by ATP to form Asp-AMP and then transferred to the acceptor end of tRNA(Asp). Is specific for tRNA(Asp) since it cannot aspartylate tRNA(Asn). The protein is Aspartate--tRNA(Asp) ligase (aspS1) of Deinococcus radiodurans (strain ATCC 13939 / DSM 20539 / JCM 16871 / CCUG 27074 / LMG 4051 / NBRC 15346 / NCIMB 9279 / VKM B-1422 / R1).